Here is a 212-residue protein sequence, read N- to C-terminus: Phosphatidylserine decarboxylase proenzyme (212 aa).

The active-site Schiff-base intermediate with substrate; via pyruvic acid is Ser182. Pyruvic acid (Ser); by autocatalysis is present on Ser182.

This sequence belongs to the phosphatidylserine decarboxylase family. PSD-A subfamily. In terms of assembly, heterodimer of a large membrane-associated beta subunit and a small pyruvoyl-containing alpha subunit. Pyruvate serves as cofactor. In terms of processing, is synthesized initially as an inactive proenzyme. Formation of the active enzyme involves a self-maturation process in which the active site pyruvoyl group is generated from an internal serine residue via an autocatalytic post-translational modification. Two non-identical subunits are generated from the proenzyme in this reaction, and the pyruvate is formed at the N-terminus of the alpha chain, which is derived from the carboxyl end of the proenzyme. The post-translation cleavage follows an unusual pathway, termed non-hydrolytic serinolysis, in which the side chain hydroxyl group of the serine supplies its oxygen atom to form the C-terminus of the beta chain, while the remainder of the serine residue undergoes an oxidative deamination to produce ammonia and the pyruvoyl prosthetic group on the alpha chain.

The protein localises to the cell membrane. It carries out the reaction a 1,2-diacyl-sn-glycero-3-phospho-L-serine + H(+) = a 1,2-diacyl-sn-glycero-3-phosphoethanolamine + CO2. Its pathway is phospholipid metabolism; phosphatidylethanolamine biosynthesis; phosphatidylethanolamine from CDP-diacylglycerol: step 2/2. Functionally, catalyzes the formation of phosphatidylethanolamine (PtdEtn) from phosphatidylserine (PtdSer). The chain is Phosphatidylserine decarboxylase proenzyme from Paraburkholderia xenovorans (strain LB400).